The following is a 108-amino-acid chain: UPF0060 membrane protein CJA_3703 (108 aa).

4 consecutive transmembrane segments (helical) span residues 6–26, 31–51, 61–81, and 85–105; these read LLFV…YLWL, SIWL…LLTL, AAYG…VDGV, and AYDW…AMGW.

Belongs to the UPF0060 family.

The protein resides in the cell inner membrane. This Cellvibrio japonicus (strain Ueda107) (Pseudomonas fluorescens subsp. cellulosa) protein is UPF0060 membrane protein CJA_3703.